Reading from the N-terminus, the 51-residue chain is UPF0391 membrane protein Mbur_2216 (51 aa).

Transmembrane regions (helical) follow at residues 1 to 21 (MADL…AYVL) and 31 to 51 (MTIA…TILL).

The protein belongs to the UPF0391 family.

It localises to the cell membrane. This chain is UPF0391 membrane protein Mbur_2216, found in Methanococcoides burtonii (strain DSM 6242 / NBRC 107633 / OCM 468 / ACE-M).